Consider the following 317-residue polypeptide: Putative cuticle collagen 80 (317 aa).

The segment at 80-262 (CNCGPQASNC…GAPGNDGAPG (183 aa)) is disordered. 3 triple-helical region regions span residues 92-124 (GPPG…AGPA), 137-199 (GAPG…SGQR), and 202-264 (GLPG…PGSD). Low complexity-rich tracts occupy residues 108-124 (QPGP…AGPA), 135-145 (PQGAPGPAGAP), and 175-206 (AGDA…LPGP). Composition is skewed to pro residues over residues 207 to 219 (SGRP…PGAP) and 230 to 240 (PAGPPGPPGPN). A compositionally biased stretch (low complexity) spans 242 to 262 (QPGHPGQDGQPGAPGNDGAPG).

The protein belongs to the cuticular collagen family. Collagen polypeptide chains are complexed within the cuticle by disulfide bonds and other types of covalent cross-links.

Its function is as follows. Nematode cuticles are composed largely of collagen-like proteins. The cuticle functions both as an exoskeleton and as a barrier to protect the worm from its environment. This Caenorhabditis elegans protein is Putative cuticle collagen 80 (col-80).